The sequence spans 237 residues: Ribosomally synthesized cyclic peptide ustiloxin B precursosr (237 aa).

The N-terminal stretch at Met-1–Ala-19 is a signal peptide. 2 consecutive propeptides follow at residues Ala-20–Arg-22 and His-234–His-237.

In terms of processing, ustA is processed by the subtilisin-like endoprotease kex2 that is outside the ustiloxin B gene cluster, at the C-terminal side of Arg-Lys, after transfer to Golgi apparatus through the endoplasmic reticulum (ER). Cleavage by kex2 generates 16 peptides YAIG-I to YAIG-XVI. To process the precursor peptide further, at least two peptidases are necessary to cleave the N-terminal and C-terminal sides of the Tyr-Ala-Ile-Gly core peptide which serves as backbone for the synthesis of ustiloxin B, through cyclization and modification of the tyrosine. One of the two peptidases must be the serine peptidase ustP; and the other pepdidase is probably ustH. Macrocyclization of the core peptide derived from ustA requires the tyrosinase ustQ, as well as the homologous oxidases ustYa and ustYb, and leads to the production of the first cyclization product N-desmethylustiloxin F. For the formation of N-desmethylustiloxin F, three oxidation steps are required, hydroxylation at the benzylic position, hydroxylation at either the aromatic ring of Tyr or beta-position of Ile, and oxidative cyclization. UstQ may catalyze the oxidation of a phenol moiety, whereas the ustYa and ustYb are most likely responsible for the remaining two-step oxidations. N-desmethylustiloxin F is then methylated by ustM to yield ustiloxin F which in turn substrate of the cytochrome P450 monooxygenase ustC which catalyzes the formation of S-deoxyustiloxin H. The flavoprotein monooxygenases ustF1 and ustF2 then participate in the modification of the side chain of S-deoxyustiloxin H, leading to the synthesis of an oxime intermediate, via ustiloxin H. Finally, carboxylative dehydration performed by the cysteine desulfurase-like protein ustD yields ustiloxin B.

The protein operates within mycotoxin biosynthesis. In terms of biological role, ribosomally synthesized cyclic peptide ustiloxin B precursor: Part of the gene cluster that mediates the biosynthesis of the secondary metabolite ustiloxin B, an antimitotic tetrapeptide. The ustA translated product contains a 16-fold repeated peptide embedding the tetrapeptide Tyr-Ala-Ile-Gly, that is converted into the cyclic moiety of ustiloxin B. In Aspergillus flavus (strain ATCC 200026 / FGSC A1120 / IAM 13836 / NRRL 3357 / JCM 12722 / SRRC 167), this protein is Ribosomally synthesized cyclic peptide ustiloxin B precursosr.